Reading from the N-terminus, the 86-residue chain is MSIDTQAIIKKYQSKTGDTGSSNVQIALLTARIKHLTEHFKTHKKDHHSRRGLLHLVSQRKKLLIYLKDANTASYSNLIIHLGLRK.

Belongs to the universal ribosomal protein uS15 family. In terms of assembly, part of the 30S ribosomal subunit. Forms a bridge to the 50S subunit in the 70S ribosome, contacting the 23S rRNA.

In terms of biological role, one of the primary rRNA binding proteins, it binds directly to 16S rRNA where it helps nucleate assembly of the platform of the 30S subunit by binding and bridging several RNA helices of the 16S rRNA. Functionally, forms an intersubunit bridge (bridge B4) with the 23S rRNA of the 50S subunit in the ribosome. This is Small ribosomal subunit protein uS15 from Ruthia magnifica subsp. Calyptogena magnifica.